The sequence spans 303 residues: UDP-N-acetylenolpyruvoylglucosamine reductase (303 aa).

The region spanning 30–196 (IGGPADLLII…LEAVFKLKQD (167 aa)) is the FAD-binding PCMH-type domain. The active site involves Arg174. Catalysis depends on Ser225, which acts as the Proton donor. Glu295 is a catalytic residue.

This sequence belongs to the MurB family. FAD is required as a cofactor.

Its subcellular location is the cytoplasm. The catalysed reaction is UDP-N-acetyl-alpha-D-muramate + NADP(+) = UDP-N-acetyl-3-O-(1-carboxyvinyl)-alpha-D-glucosamine + NADPH + H(+). Its pathway is cell wall biogenesis; peptidoglycan biosynthesis. Functionally, cell wall formation. This is UDP-N-acetylenolpyruvoylglucosamine reductase from Bacillus pumilus (strain SAFR-032).